We begin with the raw amino-acid sequence, 666 residues long: MQGPRSTGDSSTGINYADGEPICSTNSETTSNNILNPVDVQFPNNTTGSGRPTYASSSSHVVQNHNWWSFGESSSRLGPSDHLNSNGSKTDRQLLSDGYGFEEGQSGMLLPGESFLRGSSSSHMLSHVNLGKDMDIGSGLQTSGVVIRHNNCETSLGSSSQTAEERSSGPGSSLGGLGSSCKRKALEGAPSHSFPGESHGCFFQTENGAWNEGLAQYDASSSLSLSMPSQNSPNVNNQSGLPEPRFGLGGGRAVTASAFPSTRSTETISRPGRRLNPGQPPESVAFSFTQSGSSVRQQQQLPATSPFVDPLDARAIPVTGSSSSGDGQPSMIHLPALTRNIHQFAWSASSSSRANSMPEEGLSPWDAPRINSEQPVFTTPANETRNPVQDQFCWSFTRGNPSTSGDSPFVPRAGSSSGIHGLQPNPTWVTPHNQSRISEVAPWSLFPSIESESATHGASLPLLPTGPSVSSNEAAAPSGSSSRSHRSRQRRSGLLLERQNDHLHLRHLGRSLAADNDGRNRLISEIRQVLSAMRRGENLRFEDYMVFDPLIYQGMAEMHDRHRDMRLDVDNMSYEELLALGERIGDVSTGLSEEVILKVMKQHKHTSSAAGSHQDMEPCCVCQEEYAEGDDLGTLGCGHEFHTACVKQWLMLKNLCPICKTVALST.

4 stretches are compositionally biased toward polar residues: residues 1 to 14 (MQGP…STGI), 23 to 35 (CSTN…NNIL), 42 to 58 (FPNN…ASSS), and 73 to 88 (SSSR…SNGS). 6 disordered regions span residues 1–58 (MQGP…ASSS), 73–95 (SSSR…RQLL), 155–179 (SLGS…GLGS), 221–329 (SSLS…DGQP), 400–433 (NPST…TPHN), and 457–491 (GASL…RQRR). Low complexity predominate over residues 221–239 (SSLSLSMPSQNSPNVNNQS). Polar residues-rich tracts occupy residues 258-268 (AFPSTRSTETI), 286-303 (FSFT…QLPA), and 414-433 (GSSS…TPHN). An RING-type; atypical zinc finger spans residues 619 to 660 (CCVCQEEYAEGDDLGTLGCGHEFHTACVKQWLMLKNLCPICK).

This sequence belongs to the RING-type zinc finger family. Interacts with MED25 and UBC11.

The enzyme catalyses S-ubiquitinyl-[E2 ubiquitin-conjugating enzyme]-L-cysteine + [acceptor protein]-L-lysine = [E2 ubiquitin-conjugating enzyme]-L-cysteine + N(6)-ubiquitinyl-[acceptor protein]-L-lysine.. The protein operates within protein modification; protein ubiquitination. In terms of biological role, E3 ubiquitin-protein ligase that functions as a regulator of MED25 stability by targeting MED25 for degradation in a RING-H2-dependent way. Proteasome-dependent degradation of MED25 seems to activate its function as positive regulator of FLOWERING LOCUS T (FT) and is important to induce the expression of FT and consequently to promote flowering. May function downstream of HAL3 and be required for HAL3-regulated plant growth. Activation of MBR2 by HAL3 may lead to the degradation of cell cycle suppressors, resulting in enhancement of cell division and plant growth. The polypeptide is E3 ubiquitin-protein ligase MBR2 (MBR2) (Arabidopsis thaliana (Mouse-ear cress)).